The chain runs to 380 residues: MAPNPRKSHPLLKMINNSLIDLPTPPNISAWWNFGSLLALCLVTQILTGLLLAMHYTADTTLAFSSVAHTCRNVQYGWLIRNMHANGASFFFICIYMHIGRGFYYGSYLHKETWNTGVLLLLTLMATAFVGYVLPWGQMSFWGATVITNMFSAIPYIGQTIVEWAWGGFSVDNPTLTRFFALHFLLPFMIAGLTLIHLTFLHESGSNNPLGIVSNCDKIPFHPYYSLKDILGLALLLLPLTAMALFSPNLLGDPENFTPANPLVTPPHIKPEWYFLFAYAILRSIPNKLGGVLALAASVLVLLLCPFLHTSKQRTMAFRPLSQSLFWILVANLLILTWIGSQPVEHPFIIIGQLASTTYFIILLILFPITSALENKMLNF.

The next 4 membrane-spanning stretches (helical) occupy residues 34–54 (FGSL…LLAM), 78–99 (WLIR…YMHI), 114–134 (WNTG…GYVL), and 179–199 (FFAL…IHLT). 2 residues coordinate heme b: His84 and His98. The heme b site is built by His183 and His197. His202 serves as a coordination point for a ubiquinone. 4 consecutive transmembrane segments (helical) span residues 227–247 (LKDI…ALFS), 289–309 (LGGV…PFLH), 321–341 (LSQS…WIGS), and 348–368 (FIII…ILFP).

Belongs to the cytochrome b family. In terms of assembly, the cytochrome bc1 complex contains 11 subunits: 3 respiratory subunits (MT-CYB, CYC1 and UQCRFS1), 2 core proteins (UQCRC1 and UQCRC2) and 6 low-molecular weight proteins (UQCRH/QCR6, UQCRB/QCR7, UQCRQ/QCR8, UQCR10/QCR9, UQCR11/QCR10 and a cleavage product of UQCRFS1). This cytochrome bc1 complex then forms a dimer. Requires heme b as cofactor.

It localises to the mitochondrion inner membrane. Functionally, component of the ubiquinol-cytochrome c reductase complex (complex III or cytochrome b-c1 complex) that is part of the mitochondrial respiratory chain. The b-c1 complex mediates electron transfer from ubiquinol to cytochrome c. Contributes to the generation of a proton gradient across the mitochondrial membrane that is then used for ATP synthesis. This is Cytochrome b (MT-CYB) from Oceanodroma tristrami (Tristram's storm-petrel).